An 899-amino-acid chain; its full sequence is Putative lipoxygenase 5 (899 aa).

Disordered regions lie at residues 15-34 (AGSRGMGKGASRRRTARSTA), 48-68 (APVEQQRGAGRPEAHPQSVAA), and 258-291 (VASARPVLGGEQMPYPRRMRTGRPSTATDASAES). The region spanning 68–204 (ARAVVTVRRR…VSRDRRVFFS (137 aa)) is the PLAT domain. Residues 207 to 899 (PYLPSETPPG…CRGVPNSVTI (693 aa)) enclose the Lipoxygenase domain. His559, His564, His751, Asn755, and Ile899 together coordinate Fe cation.

It belongs to the lipoxygenase family. Fe cation serves as cofactor.

The catalysed reaction is (9Z,12Z)-octadecadienoate + O2 = (13S)-hydroperoxy-(9Z,11E)-octadecadienoate. It carries out the reaction (9Z,12Z,15Z)-octadecatrienoate + O2 = (13S)-hydroperoxy-(9Z,11E,15Z)-octadecatrienoate. Its pathway is lipid metabolism; oxylipin biosynthesis. In terms of biological role, plant lipoxygenase may be involved in a number of diverse aspects of plant physiology including growth and development, pest resistance, and senescence or responses to wounding. Catalyzes the hydroperoxidation of lipids containing a cis,cis-1,4-pentadiene structure. The protein is Putative lipoxygenase 5 of Oryza sativa subsp. japonica (Rice).